A 262-amino-acid polypeptide reads, in one-letter code: Indole-3-glycerol phosphate synthase (262 aa).

This sequence belongs to the TrpC family.

The catalysed reaction is 1-(2-carboxyphenylamino)-1-deoxy-D-ribulose 5-phosphate + H(+) = (1S,2R)-1-C-(indol-3-yl)glycerol 3-phosphate + CO2 + H2O. The protein operates within amino-acid biosynthesis; L-tryptophan biosynthesis; L-tryptophan from chorismate: step 4/5. The sequence is that of Indole-3-glycerol phosphate synthase from Chlorobium luteolum (strain DSM 273 / BCRC 81028 / 2530) (Pelodictyon luteolum).